Reading from the N-terminus, the 76-residue chain is Adipogenesis regulatory factor (76 aa).

As to expression, expressed in adipose tissue (at protein level). Highly expressed in omental and subcutaneous adipose tissues. Expressed in heart, cornea, liver, kidney and spleen.

It localises to the nucleus. Its function is as follows. Plays a role in fat cell development; promotes adipogenic differentiation and stimulates transcription initiation of master adipogenesis factors like PPARG and CEBPA at early stages of preadipocyte differentiation. Its overexpression confers resistance to the anticancer chemotherapeutic drug cisplatin. The polypeptide is Adipogenesis regulatory factor (ADIRF) (Homo sapiens (Human)).